The primary structure comprises 766 residues: NADH-dependent flavin oxidoreductase iliE (766 aa).

The segment covering 1 to 13 (MSEQLGSHITTPS) has biased composition (polar residues). Positions 1–24 (MSEQLGSHITTPSSHDDASKDKRP) are disordered. The segment covering 14 to 24 (SHDDASKDKRP) has biased composition (basic and acidic residues). The N-linked (GlcNAc...) asparagine glycan is linked to asparagine 30. FMN is bound at residue 61–64 (AATA). N-linked (GlcNAc...) asparagine glycans are attached at residues asparagine 70 and asparagine 136. Glutamine 143 serves as a coordination point for FMN. A substrate-binding site is contributed by 224–227 (HAGH). An FMN-binding site is contributed by 385 to 386 (AR). The 72-residue stretch at 551–622 (TPYDILAMRK…SKRSLYDTQG (72 aa)) folds into the J domain. 3 N-linked (GlcNAc...) asparagine glycosylation sites follow: asparagine 634, asparagine 650, and asparagine 654. A helical membrane pass occupies residues 675-695 (MYMSNGVFATLVVMMCMIGAF).

This sequence belongs to the NADH:flavin oxidoreductase/NADH oxidase family.

It is found in the membrane. In terms of biological role, NADH-dependent flavin oxidoreductase; part of the gene cluster that mediates the biosynthesis of ilicicolin H, a 4-hydroxy-2-pyridonealkaloid that has potent and broad antifungal activities by inhibiting the mitochondrial respiration chain. The biosynthesis of ilicicolin H starts with formation of the tetramic acid by the hybrid PKS-NRPS synthetase iliA with the partnering trans-enoyl reductase iliB since iliA lacks a designated enoylreductase (ER) domain. The cytochrome P450 monooxygenase iliC then catalyzes the ring expansion of the tetramate to the acyclic 2-pyridone. The pericyclase iliD further converts the acyclic 2-pyridone into 8-epi-ilicicolin H. 8-epi-ilicicolin H might then spontaneously convert to ilicicolin H since ilicicolin H is produced in the absence of the epimerase iliE, in contrast to what was observed for the Talaromyces variabilis ilicolin H biosynthetic pathway. This chain is NADH-dependent flavin oxidoreductase iliE, found in Neonectria sp. (strain DH2).